Here is a 526-residue protein sequence, read N- to C-terminus: Glutamyl-tRNA(Gln) amidotransferase subunit A, mitochondrial (526 aa).

Residues Lys-76 and Ser-171 each act as charge relay system in the active site. The active-site Acyl-ester intermediate is the Ser-195.

The protein belongs to the amidase family. GatA subfamily. As to quaternary structure, subunit of the heterotrimeric GatCAB amidotransferase (AdT) complex, composed of A (QRSL1), B (GATB) and C (GATC) subunits.

Its subcellular location is the mitochondrion. The enzyme catalyses L-glutamyl-tRNA(Gln) + L-glutamine + ATP + H2O = L-glutaminyl-tRNA(Gln) + L-glutamate + ADP + phosphate + H(+). Its function is as follows. Allows the formation of correctly charged Gln-tRNA(Gln) through the transamidation of misacylated Glu-tRNA(Gln) in the mitochondria. The reaction takes place in the presence of glutamine and ATP through an activated gamma-phospho-Glu-tRNA(Gln). This chain is Glutamyl-tRNA(Gln) amidotransferase subunit A, mitochondrial, found in Canis lupus familiaris (Dog).